Here is a 489-residue protein sequence, read N- to C-terminus: MAGKSFMTPAIMLAMLLLISPETYAGHDYRDALRKSILFFEGQRSGKLPPDQRLKWRRDSALRDGSSAGVDLTGGYYDAGDNVKFGFPMAFTTTMMSWSVIDFGKTMGPELENAVKAIKWGTDYLMKATQIPDVVFVQVGDAYSDHNCWERPEDMDTLRTVYKIDKDHSGSEVAGETAAALAAASIVFEKRDPVYSKMLLDRATRVFAFAQKYRGAYSDSLYQAVCPFYCDFNGYEDELLWGAAWLHKASKKRVYREFIVKNQVILRAGDTIHEFGWDNKHAGINVLVSKMVLMGKAEYFQSFKQNADEFICSLLPGISHPQVQYSQGGLLVKSGGSNMQHVTSLSFLLLTYSNYLSHANKVVPCGEFTASPALLRQVAKRQVDYILGDNPMKMSYMVGYGSRFPQKIHHRGSSVPSVVDHPDRIGCKDGSRYFFSNNPNPNLLIGAVVGGPNITDDFPDSRPYFQLTEPTTYINAPLLGLLGYFSAHY.

The N-terminal stretch at 1-25 (MAGKSFMTPAIMLAMLLLISPETYA) is a signal peptide. Asp-81 functions as the Nucleophile in the catalytic mechanism. Residue His-409 is part of the active site. Asn-453 carries an N-linked (GlcNAc...) asparagine glycan. Catalysis depends on residues Asp-460 and Glu-469.

It belongs to the glycosyl hydrolase 9 (cellulase E) family.

It localises to the secreted. The catalysed reaction is Endohydrolysis of (1-&gt;4)-beta-D-glucosidic linkages in cellulose, lichenin and cereal beta-D-glucans.. The polypeptide is Endoglucanase 4 (Arabidopsis thaliana (Mouse-ear cress)).